The following is a 324-amino-acid chain: NADH-ubiquinone oxidoreductase chain 1 (324 aa).

The next 8 helical transmembrane spans lie at 9-29, 75-95, 106-126, 146-166, 178-198, 212-232, 259-279, and 299-319; these read LINP…LTLV, ILFL…WAPM, LGIL…LGSG, ISYE…SGGY, TWLL…TLAE, ELVS…FFLA, ELMT…FLWM, and FLPI…ALAG.

The protein belongs to the complex I subunit 1 family. As to quaternary structure, core subunit of respiratory chain NADH dehydrogenase (Complex I) which is composed of 45 different subunits.

It is found in the mitochondrion inner membrane. It carries out the reaction a ubiquinone + NADH + 5 H(+)(in) = a ubiquinol + NAD(+) + 4 H(+)(out). Core subunit of the mitochondrial membrane respiratory chain NADH dehydrogenase (Complex I) which catalyzes electron transfer from NADH through the respiratory chain, using ubiquinone as an electron acceptor. Essential for the catalytic activity and assembly of complex I. This chain is NADH-ubiquinone oxidoreductase chain 1 (mt-nd1), found in Danio rerio (Zebrafish).